The sequence spans 403 residues: Cytochrome P450-SU2 (403 aa).

Residues 1-24 (MTTAERTAPPDALTVPASRAPGCP) are disordered. C352 contributes to the heme binding site.

The protein belongs to the cytochrome P450 family. Heme serves as cofactor.

Metabolism of a number of sulfonylurea herbicides. This is Cytochrome P450-SU2 (cyp105B1) from Streptomyces griseolus.